Reading from the N-terminus, the 118-residue chain is Large ribosomal subunit protein bL20 (118 aa).

The protein belongs to the bacterial ribosomal protein bL20 family.

Functionally, binds directly to 23S ribosomal RNA and is necessary for the in vitro assembly process of the 50S ribosomal subunit. It is not involved in the protein synthesizing functions of that subunit. The polypeptide is Large ribosomal subunit protein bL20 (Trichormus variabilis (strain ATCC 29413 / PCC 7937) (Anabaena variabilis)).